An 809-amino-acid polypeptide reads, in one-letter code: MRKWALSCALLLVLLLTTLPDPAKKLQVNAEESSDEVGDFPKVEEKLGAVPHGLSTDSEVVQRESESISRKTLRNSAEKFEFQAEVSRLMDIIINSLYSNKDIFLRELISNASDALDKIRFLALTDKEVMGEGDTAKLEIQIKLDKENKILSIRDRGVGMTKEDLIKNLGTIAKSGTSAFVEKMQTGGDLNLIGQFGVGFYSVYLVADYVEVVSKHNDDKQYVWESKADGSFAISEDTWNEPLGRGTEIKLHLRDEAKEYLEEGKLKDLVKKYSEFINFPIYLWATKEVDVEVPADEEESNEEEESTTETTEEEETEDDEEKKPKTKTVKETTTEWELLNDMKAVWLRSPKEVTEEEYAKFYHSLAKDFGDDKPMSWSHFSAEGDVEFKALLFVPPKAPHDLYESYYNANKSNLKLYVRRVFISDEFDDLLPKYLSFLMGIVDSDTLPLNVSREMLQQHSSLKTIKKKLIRKALDMIRKLAEEDPDEYSNKEKTDDEKSAMEEKKGQYAKFWNEFGKSVKLGIIEDATNRNRLAKLLRFESSKSDGKLVSLDEYISRMKSGQKDIFYLTGSSKEQLEKSPFLEQLTKKNYEVIYFTDPVDEYLMQYLMDYEDKKFQNVSKEGLKLGKDSKLKDLKESFKELTDWWKKALDTEGIDSVKISNRLHNTPCVVVTSKYGWSSNMEKIMQAQTLSDASKQAYMRGKRVLEINPRHPIIKELRDKVAQDSDSEGLKQTARLVYQTALMESGFNLPDPKDFASSIYRSVQKSLDLSPDAAVEEEEEVEEPEVEEKESAKQEAEEPEHEQYDKDEL.

A signal peptide spans 1-18; it reads MRKWALSCALLLVLLLTT. 4 residues coordinate ATP: Asn111, Asp155, Asn168, and Phe200. Asn111 carries N-linked (GlcNAc...) asparagine glycosylation. The segment covering 293–320 has biased composition (acidic residues); the sequence is VPADEEESNEEEESTTETTEEEETEDDE. A disordered region spans residues 293 to 329; that stretch reads VPADEEESNEEEESTTETTEEEETEDDEEKKPKTKTV. N-linked (GlcNAc...) asparagine glycosylation is found at Asn410, Asn450, and Asn617. The tract at residues 766 to 809 is disordered; the sequence is SLDLSPDAAVEEEEEVEEPEVEEKESAKQEAEEPEHEQYDKDEL. Over residues 774–788 the composition is skewed to acidic residues; it reads AVEEEEEVEEPEVEE. The segment covering 789–809 has biased composition (basic and acidic residues); it reads KESAKQEAEEPEHEQYDKDEL. The short motif at 806-809 is the Prevents secretion from ER element; the sequence is KDEL.

Belongs to the heat shock protein 90 family.

The protein localises to the endoplasmic reticulum lumen. Its function is as follows. May have a molecular chaperone role in the processing of secreted materials. This chain is Endoplasmin homolog, found in Hordeum vulgare (Barley).